Here is a 699-residue protein sequence, read N- to C-terminus: Protein phosphatase 1 regulatory subunit 37 (699 aa).

Residues methionine 1 to proline 12 show a composition bias toward pro residues. The segment at methionine 1–alanine 42 is disordered. Serine 50 and serine 56 each carry phosphoserine. LRR repeat units follow at residues serine 220–alanine 240, threonine 248–glycine 269, serine 277–cysteine 297, glycine 306–glycine 326, and serine 334–lysine 354. The interval arginine 467 to serine 667 is disordered. Acidic residues predominate over residues serine 510–aspartate 525. A Phosphoserine modification is found at serine 566. Pro residues-rich tracts occupy residues proline 588–threonine 613 and aspartate 622–proline 642.

The protein belongs to the PPP1R37 family. Interacts with PPP1CA.

Its function is as follows. Inhibits phosphatase activity of protein phosphatase 1 (PP1) complexes. This is Protein phosphatase 1 regulatory subunit 37 (PPP1R37) from Bos taurus (Bovine).